We begin with the raw amino-acid sequence, 290 residues long: Ribonuclease HIII (290 aa).

The region spanning 78–290 (LPLIGTDEVG…FKNTEKAKNA (213 aa)) is the RNase H type-2 domain. A divalent metal cation is bound by residues aspartate 84, glutamate 85, and aspartate 187.

It belongs to the RNase HII family. RnhC subfamily. It depends on Mn(2+) as a cofactor. Requires Mg(2+) as cofactor.

The protein resides in the cytoplasm. The enzyme catalyses Endonucleolytic cleavage to 5'-phosphomonoester.. Its function is as follows. Endonuclease that specifically degrades the RNA of RNA-DNA hybrids. This is Ribonuclease HIII from Streptococcus pneumoniae (strain P1031).